Reading from the N-terminus, the 220-residue chain is Fructose-6-phosphate aldolase (220 aa).

Lysine 85 serves as the catalytic Schiff-base intermediate with substrate.

Belongs to the transaldolase family. Type 3A subfamily. In terms of assembly, homodecamer.

It localises to the cytoplasm. It carries out the reaction beta-D-fructose 6-phosphate = dihydroxyacetone + D-glyceraldehyde 3-phosphate. In terms of biological role, catalyzes the reversible formation of fructose 6-phosphate from dihydroxyacetone and D-glyceraldehyde 3-phosphate via an aldolization reaction. This Salmonella arizonae (strain ATCC BAA-731 / CDC346-86 / RSK2980) protein is Fructose-6-phosphate aldolase.